Here is a 555-residue protein sequence, read N- to C-terminus: KHAQRIETWILRHPGFTIMAAILAYTIGTTHFQRALIFILLTAVAPSMTMRCIGISNRDFVEGVSGGSWVDIVLEHGSCVTTMAKNKPTLDFELIKTEAKQPVTLRKYCIEAKLTNTTTESRCPIQGEPSLNEEQDKRFVCKHSMVDRGWGNGCGLFGKGGIVTCAMFTCKKNMKGKVVQPENLEYTIVITPHSGEEHAVGNDTGKHGKEIKITPQSSITEAELTGYGTVTMECSPRTGLDFNEMVLLQMENKAWLVHRQWFLDLPLPWLPGADTQGSNWIQKETLVTFKNPHAKKQDVVVLGSQEGAMHTALTGATEIQMSSGNLLFTGHLKCRLRMDKLQLKGMSYSMCTGKFKVVKEIAETQHGTIVIRVQYEGDGSPCKIPFEIMDLEKRHVLGRLITVNPIVTEKDSPVNIEAEPPFGDSYIIIGVEPEQLKLNWFKKGSSIGQMFETTMRGAKRMAILGDTAWDFGSLGGVFTSIGKALHQVFGAIYGAAFSGVSWTMKILIGVIITWIGMNSRSTSLSVSLVLVGIVTLYLEVMVQADSGCVVSWKNK.

At 1-7 (KHAQRIE) the chain is on the extracellular side. Residues 8–28 (TWILRHPGFTIMAAILAYTIG) traverse the membrane as a helical segment. Residues 29 to 34 (TTHFQR) lie on the Cytoplasmic side of the membrane. A helical membrane pass occupies residues 35 to 49 (ALIFILLTAVAPSMT). Topologically, residues 50–494 (MRCIGISNRD…LHQVFGAIYG (445 aa)) are extracellular. Intrachain disulfides connect Cys52–Cys79, Cys109–Cys170, Cys123–Cys154, and Cys141–Cys165. Asn116 carries N-linked (GlcNAc...) asparagine; by host glycosylation. The tract at residues 147–160 (DRGWGNGCGLFGKG) is fusion peptide. A glycan (N-linked (GlcNAc...) asparagine; by host) is linked at Asn202. 2 disulfides stabilise this stretch: Cys234–Cys334 and Cys351–Cys382. Residues 495 to 515 (AAFSGVSWTMKILIGVIITWI) traverse the membrane as a helical segment. Over 516-521 (GMNSRS) the chain is Cytoplasmic. A helical transmembrane segment spans residues 522-542 (TSLSVSLVLVGIVTLYLEVMV). Over 543-555 (QADSGCVVSWKNK) the chain is Extracellular.

As to quaternary structure, homodimer; in the endoplasmic reticulum and Golgi. Interacts with protein prM. Interacts with non-structural protein 1. In terms of assembly, homodimer; Homohexamer when secreted. Interacts with envelope protein E. Post-translationally, N-glycosylated. In terms of processing, N-glycosylated. The excreted form is glycosylated and this is required for efficient secretion of the protein from infected cells. Specific enzymatic cleavages in vivo yield mature proteins. Cleavages in the lumen of endoplasmic reticulum are performed by host signal peptidase, wereas cleavages in the cytoplasmic side are performed by serine protease NS3. Signal cleavage at the 2K-4B site requires a prior NS3 protease-mediated cleavage at the 4A-2K site.

Its subcellular location is the virion membrane. It localises to the host endoplasmic reticulum membrane. The protein localises to the secreted. May play a role in virus budding. Exerts cytotoxic effects by activating a mitochondrial apoptotic pathway through M ectodomain. May display a viroporin activity. Its function is as follows. Binds to host cell surface receptor and mediates fusion between viral and cellular membranes. Envelope protein is synthesized in the endoplasmic reticulum in the form of heterodimer with protein prM. They play a role in virion budding in the ER, and the newly formed immature particle is covered with 60 spikes composed of heterodimer between precursor prM and envelope protein E. The virion is transported to the Golgi apparatus where the low pH causes dissociation of PrM-E heterodimers and formation of E homodimers. prM-E cleavage is inefficient, and many virions are only partially matured. These uncleaved prM would play a role in immune evasion. Functionally, involved in immune evasion, pathogenesis and viral replication. Once cleaved off the polyprotein, is targeted to three destinations: the viral replication cycle, the plasma membrane and the extracellular compartment. Essential for viral replication. Required for formation of the replication complex and recruitment of other non-structural proteins to the ER-derived membrane structures. Excreted as a hexameric lipoparticle that plays a role against host immune response. Antagonizing the complement function. Binds to the host macrophages and dendritic cells. Inhibits signal transduction originating from Toll-like receptor 3 (TLR3). In terms of biological role, disrupts the host endothelial glycocalyx layer of host pulmonary microvascular endothelial cells, inducing degradation of sialic acid and shedding of heparan sulfate proteoglycans. NS1 induces expression of sialidases, heparanase, and activates cathepsin L, which activates heparanase via enzymatic cleavage. These effects are probably linked to the endothelial hyperpermeability observed in severe dengue disease. The polypeptide is Genome polyprotein (Dengue virus type 2 (strain Thailand/TH-36/1958) (DENV-2)).